The following is a 100-amino-acid chain: Small ribosomal subunit protein bS20 (100 aa).

Over residues 1–22 (MASGKPKKKNPRLASGRKRARQ) the composition is skewed to basic residues. The disordered stretch occupies residues 1–26 (MASGKPKKKNPRLASGRKRARQGLKL).

This sequence belongs to the bacterial ribosomal protein bS20 family.

In terms of biological role, binds directly to 16S ribosomal RNA. The sequence is that of Small ribosomal subunit protein bS20 from Acidovorax ebreus (strain TPSY) (Diaphorobacter sp. (strain TPSY)).